The following is a 244-amino-acid chain: Small ribosomal subunit protein uS3 (244 aa).

Residues 39 to 107 (IRELIKKESF…KLIINVEEIK (69 aa)) enclose the KH type-2 domain. A disordered region spans residues 216–244 (LPVYKNKKNDKNKKRRNNNRKGKSQAAKN). Residues 220 to 238 (KNKKNDKNKKRRNNNRKGK) show a composition bias toward basic residues.

The protein belongs to the universal ribosomal protein uS3 family. Part of the 30S ribosomal subunit. Forms a tight complex with proteins S10 and S14.

Functionally, binds the lower part of the 30S subunit head. Binds mRNA in the 70S ribosome, positioning it for translation. This Finegoldia magna (strain ATCC 29328 / DSM 20472 / WAL 2508) (Peptostreptococcus magnus) protein is Small ribosomal subunit protein uS3.